We begin with the raw amino-acid sequence, 422 residues long: Histidine--tRNA ligase (422 aa).

It belongs to the class-II aminoacyl-tRNA synthetase family. In terms of assembly, homodimer.

The protein localises to the cytoplasm. It catalyses the reaction tRNA(His) + L-histidine + ATP = L-histidyl-tRNA(His) + AMP + diphosphate + H(+). In Prosthecochloris aestuarii (strain DSM 271 / SK 413), this protein is Histidine--tRNA ligase.